The chain runs to 215 residues: ATP-dependent dethiobiotin synthetase BioD (215 aa).

13 to 18 (DIGKTV) lines the ATP pocket. T17 is a Mg(2+) binding site. K38 is a catalytic residue. T42 is a binding site for substrate. ATP contacts are provided by residues D50, 115-118 (EGAG), and 175-176 (NH). Positions 50 and 115 each coordinate Mg(2+).

This sequence belongs to the dethiobiotin synthetase family. In terms of assembly, homodimer. Mg(2+) serves as cofactor.

Its subcellular location is the cytoplasm. The catalysed reaction is (7R,8S)-7,8-diammoniononanoate + CO2 + ATP = (4R,5S)-dethiobiotin + ADP + phosphate + 3 H(+). Its pathway is cofactor biosynthesis; biotin biosynthesis; biotin from 7,8-diaminononanoate: step 1/2. In terms of biological role, catalyzes a mechanistically unusual reaction, the ATP-dependent insertion of CO2 between the N7 and N8 nitrogen atoms of 7,8-diaminopelargonic acid (DAPA, also called 7,8-diammoniononanoate) to form a ureido ring. The polypeptide is ATP-dependent dethiobiotin synthetase BioD (Neisseria meningitidis serogroup C (strain 053442)).